Consider the following 209-residue polypeptide: Uracil phosphoribosyltransferase (209 aa).

5-phospho-alpha-D-ribose 1-diphosphate-binding positions include arginine 79, arginine 104, and 131-139; that span reads DPMLATGNS. Uracil is bound by residues isoleucine 194 and 199–201; that span reads GDA. 5-phospho-alpha-D-ribose 1-diphosphate is bound at residue aspartate 200.

The protein belongs to the UPRTase family. Mg(2+) serves as cofactor.

The enzyme catalyses UMP + diphosphate = 5-phospho-alpha-D-ribose 1-diphosphate + uracil. Its pathway is pyrimidine metabolism; UMP biosynthesis via salvage pathway; UMP from uracil: step 1/1. Its activity is regulated as follows. Allosterically activated by GTP. Its function is as follows. Catalyzes the conversion of uracil and 5-phospho-alpha-D-ribose 1-diphosphate (PRPP) to UMP and diphosphate. The polypeptide is Uracil phosphoribosyltransferase (Rhizobium etli (strain CIAT 652)).